The primary structure comprises 264 residues: Thymidylate synthase 2 (264 aa).

Arg-21 provides a ligand contact to dUMP. (6R)-5,10-methylene-5,6,7,8-tetrahydrofolate is bound at residue His-51. 126 to 127 (RR) contacts dUMP. Cys-146 serves as the catalytic Nucleophile. Residues 166–169 (RSAD), Asn-177, and 207–209 (HIY) each bind dUMP. Residue Asp-169 participates in (6R)-5,10-methylene-5,6,7,8-tetrahydrofolate binding. Ser-263 serves as a coordination point for (6R)-5,10-methylene-5,6,7,8-tetrahydrofolate.

It belongs to the thymidylate synthase family. Bacterial-type ThyA subfamily. In terms of assembly, homodimer.

The protein resides in the cytoplasm. It carries out the reaction dUMP + (6R)-5,10-methylene-5,6,7,8-tetrahydrofolate = 7,8-dihydrofolate + dTMP. The protein operates within pyrimidine metabolism; dTTP biosynthesis. Catalyzes the reductive methylation of 2'-deoxyuridine-5'-monophosphate (dUMP) to 2'-deoxythymidine-5'-monophosphate (dTMP) while utilizing 5,10-methylenetetrahydrofolate (mTHF) as the methyl donor and reductant in the reaction, yielding dihydrofolate (DHF) as a by-product. This enzymatic reaction provides an intracellular de novo source of dTMP, an essential precursor for DNA biosynthesis. The protein is Thymidylate synthase 2 of Bacillus spizizenii (strain ATCC 23059 / NRRL B-14472 / W23) (Bacillus subtilis subsp. spizizenii).